Here is a 204-residue protein sequence, read N- to C-terminus: Large ribosomal subunit protein uL4 (204 aa).

Positions 49–76 (KTKGISDVSGTTAKPYGQKRTGRARQGS) are disordered.

This sequence belongs to the universal ribosomal protein uL4 family. In terms of assembly, part of the 50S ribosomal subunit.

In terms of biological role, one of the primary rRNA binding proteins, this protein initially binds near the 5'-end of the 23S rRNA. It is important during the early stages of 50S assembly. It makes multiple contacts with different domains of the 23S rRNA in the assembled 50S subunit and ribosome. Forms part of the polypeptide exit tunnel. The chain is Large ribosomal subunit protein uL4 from Wolbachia pipientis wMel.